A 224-amino-acid chain; its full sequence is MSNQKALVIFSGGQDSTTCLIQAIQTYGRENVQAITFRYGQRHAVELERAEWIAQDLGVSQTVLDLSLMRQITHNALMDETAAIETAAIETADNGVPNTFVDGRNALFLLYAAIFAKGQGIRHIIAGVCETDFSGYPDCRGVFVKSMNVTLNLAMDYDFQIHTPLMYLTKAQTWALADEMGVLDYIREQTHTCYKGIVGGCRECPSCILRERGLAECLESKKAV.

Residue 10-20 (FSGGQDSTTCL) participates in ATP binding. C193, C201, C204, and C207 together coordinate Zn(2+).

The protein belongs to the QueC family. It depends on Zn(2+) as a cofactor.

It carries out the reaction 7-carboxy-7-deazaguanine + NH4(+) + ATP = 7-cyano-7-deazaguanine + ADP + phosphate + H2O + H(+). It functions in the pathway purine metabolism; 7-cyano-7-deazaguanine biosynthesis. Functionally, catalyzes the ATP-dependent conversion of 7-carboxy-7-deazaguanine (CDG) to 7-cyano-7-deazaguanine (preQ(0)). The polypeptide is 7-cyano-7-deazaguanine synthase (Neisseria gonorrhoeae (strain ATCC 700825 / FA 1090)).